The chain runs to 434 residues: GTPase Obg (434 aa).

The 159-residue stretch at 4 to 162 (ADFIDRIVIY…RKLVLELKLL (159 aa)) folds into the Obg domain. Residues 163-333 (ADVGLVGYPN…IVYKLAEIVK (171 aa)) enclose the OBG-type G domain. GTP contacts are provided by residues 169-176 (GYPNVGKS), 194-198 (FTTTI), 215-218 (DIPG), 285-288 (NKID), and 314-316 (SII). Residues Ser176 and Thr196 each coordinate Mg(2+). One can recognise an OCT domain in the interval 355–434 (LWKELPERFN…VAQRAFEYKE (80 aa)).

Belongs to the TRAFAC class OBG-HflX-like GTPase superfamily. OBG GTPase family. In terms of assembly, monomer. Mg(2+) serves as cofactor.

It is found in the cytoplasm. In terms of biological role, an essential GTPase which binds GTP, GDP and possibly (p)ppGpp with moderate affinity, with high nucleotide exchange rates and a fairly low GTP hydrolysis rate. Plays a role in control of the cell cycle, stress response, ribosome biogenesis and in those bacteria that undergo differentiation, in morphogenesis control. The polypeptide is GTPase Obg (Thermosipho africanus (strain TCF52B)).